The following is a 57-amino-acid chain: MPRDIIILECTEAKAEGKPTSRYVTTRNKKSLRTPGRLEKIKYNPFLKRRTLHREMR.

Belongs to the bacterial ribosomal protein bL33 family.

This Akkermansia muciniphila (strain ATCC BAA-835 / DSM 22959 / JCM 33894 / BCRC 81048 / CCUG 64013 / CIP 107961 / Muc) protein is Large ribosomal subunit protein bL33.